The primary structure comprises 446 residues: Phosphoglucosamine mutase (446 aa).

Catalysis depends on Ser100, which acts as the Phosphoserine intermediate. Mg(2+) contacts are provided by Ser100, Asp241, Asp243, and Asp245. At Ser100 the chain carries Phosphoserine.

Belongs to the phosphohexose mutase family. Requires Mg(2+) as cofactor. In terms of processing, activated by phosphorylation.

It catalyses the reaction alpha-D-glucosamine 1-phosphate = D-glucosamine 6-phosphate. Its function is as follows. Catalyzes the conversion of glucosamine-6-phosphate to glucosamine-1-phosphate. The protein is Phosphoglucosamine mutase of Methylobacterium sp. (strain 4-46).